Reading from the N-terminus, the 308-residue chain is F420-non-reducing hydrogenase subunit G (308 aa).

The protein belongs to the [NiFe]/[NiFeSe] hydrogenase small subunit family. As to quaternary structure, the F420-non-reducing hydrogenase is composed of three subunits; MvhA, MvhD and MvhG. It forms a complex with the heterodisulfide reductase (hdr).

Part of a complex that provides reducing equivalents for heterodisulfide reductase. This chain is F420-non-reducing hydrogenase subunit G (mvhG), found in Methanothermobacter thermautotrophicus (strain ATCC 29096 / DSM 1053 / JCM 10044 / NBRC 100330 / Delta H) (Methanobacterium thermoautotrophicum).